A 216-amino-acid chain; its full sequence is Phosphoenolpyruvate guanylyltransferase (216 aa).

Thr-139, Gly-155, and Ser-158 together coordinate phosphoenolpyruvate.

The protein belongs to the CofC family.

The catalysed reaction is phosphoenolpyruvate + GTP + H(+) = enolpyruvoyl-2-diphospho-5'-guanosine + diphosphate. It participates in cofactor biosynthesis; coenzyme F420 biosynthesis. Guanylyltransferase that catalyzes the activation of phosphoenolpyruvate (PEP) as enolpyruvoyl-2-diphospho-5'-guanosine, via the condensation of PEP with GTP. It is involved in the biosynthesis of coenzyme F420, a hydride carrier cofactor. The chain is Phosphoenolpyruvate guanylyltransferase from Streptomyces avermitilis (strain ATCC 31267 / DSM 46492 / JCM 5070 / NBRC 14893 / NCIMB 12804 / NRRL 8165 / MA-4680).